The following is a 358-amino-acid chain: 3-dehydroquinate synthase (358 aa).

Residues 70 to 75, 104 to 108, 128 to 129, Lys-141, Lys-150, and 168 to 171 each bind NAD(+); these read DGEQYK, GVVGD, TT, and CLNT. Zn(2+) contacts are provided by Glu-183, His-246, and His-263.

Belongs to the sugar phosphate cyclases superfamily. Dehydroquinate synthase family. Requires Co(2+) as cofactor. Zn(2+) is required as a cofactor. NAD(+) serves as cofactor.

It is found in the cytoplasm. It carries out the reaction 7-phospho-2-dehydro-3-deoxy-D-arabino-heptonate = 3-dehydroquinate + phosphate. Its pathway is metabolic intermediate biosynthesis; chorismate biosynthesis; chorismate from D-erythrose 4-phosphate and phosphoenolpyruvate: step 2/7. Catalyzes the conversion of 3-deoxy-D-arabino-heptulosonate 7-phosphate (DAHP) to dehydroquinate (DHQ). This chain is 3-dehydroquinate synthase, found in Shewanella sediminis (strain HAW-EB3).